The sequence spans 424 residues: Virion nicking-joining enzyme (424 aa).

It belongs to the orthopoxvirus OPG042 family.

The protein localises to the virion. In terms of biological role, DNA nicking enzyme that cleaves extruded cruciform DNA at its tip. Probably nicks viral hairpins. This is Virion nicking-joining enzyme (OPG042) from Cynomys gunnisoni (Gunnison's prairie dog).